The following is a 957-amino-acid chain: Ribonuclease 3-like protein 3 (957 aa).

Residues 4-142 (VEAVEKILNY…IAATVFIDVN (139 aa)) form the RNase III 1 domain. In terms of domain architecture, DRBM 1 spans 307 to 382 (NGRGELIEIC…AYHMIRALES (76 aa)). In terms of domain architecture, RNase III 2 spans 415 to 551 (VEAVEKILNY…VAGAVYIDVK (137 aa)). 2 consecutive DRBM domains span residues 566–645 (EPIY…KLSE) and 837–912 (DEKG…ALES).

Functionally, ribonuclease that cleaves double-stranded RNA (dsRNA). This Arabidopsis thaliana (Mouse-ear cress) protein is Ribonuclease 3-like protein 3 (RTL3).